We begin with the raw amino-acid sequence, 138 residues long: Acidic phospholipase A2 Tpu-E6a (138 aa).

The N-terminal stretch at 1–16 (MRTLWIMAVLLLGVKG) is a signal peptide. 7 disulfide bridges follow: Cys-42–Cys-131, Cys-44–Cys-60, Cys-59–Cys-111, Cys-65–Cys-138, Cys-66–Cys-104, Cys-73–Cys-97, and Cys-91–Cys-102. Tyr-43, Gly-45, and Gly-47 together coordinate Ca(2+). The active site involves His-63. Asp-64 provides a ligand contact to Ca(2+). Asp-105 is a catalytic residue.

Monomer. Ca(2+) serves as cofactor. As to expression, expressed by the venom gland.

The protein resides in the secreted. The enzyme catalyses a 1,2-diacyl-sn-glycero-3-phosphocholine + H2O = a 1-acyl-sn-glycero-3-phosphocholine + a fatty acid + H(+). Snake venom phospholipase A2 (PLA2) that impairs hemostasis. It weakly inhibits ADP-induced platelet aggregation when tested on platelet rich plasma from human and rabbit blood (15-25% of inhibition at 5-10 ug of enzyme), and dose-dependently inhibits blood coagulation, possibly by inhibiting thrombin activation. Exhibits high hydrolytic activities toward L-dipalmitoyl phosphatidylcholine. PLA2 catalyzes the calcium-dependent hydrolysis of the 2-acyl groups in 3-sn-phosphoglycerides. The chain is Acidic phospholipase A2 Tpu-E6a from Craspedocephalus puniceus (Flat-nosed pitviper).